The primary structure comprises 554 residues: Valerianol synthase TPS1F (554 aa).

Residues D307 and D311 each contribute to the Mg(2+) site. A DDXXD motif motif is present at residues 326–330; sequence VQRWD. D452, S456, and E460 together coordinate Mg(2+).

Belongs to the terpene synthase family. The cofactor is Mg(2+).

It carries out the reaction (2E,6E)-farnesyl diphosphate + H2O = valerianol + diphosphate. It functions in the pathway secondary metabolite biosynthesis; terpenoid biosynthesis. Its function is as follows. Terpene synthase that catalyzes the biosynthesis of the terpene valerianol, which is a volatile compound of floral scent. This is Valerianol synthase TPS1F from Camellia hiemalis (Camellia).